Here is an 879-residue protein sequence, read N- to C-terminus: Alanine--tRNA ligase (879 aa).

Zn(2+) is bound by residues His-566, His-570, Cys-668, and His-672.

It belongs to the class-II aminoacyl-tRNA synthetase family. It depends on Zn(2+) as a cofactor.

It is found in the cytoplasm. It carries out the reaction tRNA(Ala) + L-alanine + ATP = L-alanyl-tRNA(Ala) + AMP + diphosphate. Catalyzes the attachment of alanine to tRNA(Ala) in a two-step reaction: alanine is first activated by ATP to form Ala-AMP and then transferred to the acceptor end of tRNA(Ala). Also edits incorrectly charged Ser-tRNA(Ala) and Gly-tRNA(Ala) via its editing domain. In Clostridium perfringens (strain 13 / Type A), this protein is Alanine--tRNA ligase.